Here is a 921-residue protein sequence, read N- to C-terminus: Isoleucine--tRNA ligase (921 aa).

Positions 57 to 67 (PYANGDIHMGH) match the 'HIGH' region motif. E552 serves as a coordination point for L-isoleucyl-5'-AMP. Positions 593 to 597 (KMSKS) match the 'KMSKS' region motif. K596 contributes to the ATP binding site. Zn(2+) is bound by residues C888, C891, C908, and C911.

It belongs to the class-I aminoacyl-tRNA synthetase family. IleS type 1 subfamily. As to quaternary structure, monomer. It depends on Zn(2+) as a cofactor.

Its subcellular location is the cytoplasm. It catalyses the reaction tRNA(Ile) + L-isoleucine + ATP = L-isoleucyl-tRNA(Ile) + AMP + diphosphate. In terms of biological role, catalyzes the attachment of isoleucine to tRNA(Ile). As IleRS can inadvertently accommodate and process structurally similar amino acids such as valine, to avoid such errors it has two additional distinct tRNA(Ile)-dependent editing activities. One activity is designated as 'pretransfer' editing and involves the hydrolysis of activated Val-AMP. The other activity is designated 'posttransfer' editing and involves deacylation of mischarged Val-tRNA(Ile). The polypeptide is Isoleucine--tRNA ligase (Bacillus cereus (strain AH820)).